A 705-amino-acid chain; its full sequence is Probable glutamate carboxypeptidase AMP1 (705 aa).

Residues 1–24 (MSQPLTTRPTVTGISIIPFRQPPP) are Cytoplasmic-facing. Residues 25-42 (LCSFLFVIVLFVATFYTL) form a helical; Signal-anchor for type II membrane protein membrane-spanning segment. Residues 43-705 (HHPDAVTPPL…ASKALKGGFT (663 aa)) are Extracellular-facing. N-linked (GlcNAc...) asparagine glycosylation is found at Asn74, Asn137, and Asn322. The segment at 255 to 548 (GVVGGEKLSL…GIWGLLGILL (294 aa)) is catalytic. Residues His356 and Asp366 each coordinate Zn(2+). Glu403 functions as the Nucleophile in the catalytic mechanism. Glu404, Asp432, and His514 together coordinate Zn(2+). The N-linked (GlcNAc...) asparagine glycan is linked to Asn676.

This sequence belongs to the peptidase M28 family. M28B subfamily. Zn(2+) serves as cofactor. Expressed in all plant parts. Highest levels in the bolt stem, inflorescence, root and silique. Low level in leaves.

The protein resides in the endoplasmic reticulum membrane. The catalysed reaction is Release of an unsubstituted, C-terminal glutamyl residue, typically from Ac-Asp-Glu or folylpoly-gamma-glutamates.. May modulate the level of one or more small signaling molecules that have a role in regulating meristem function. May play a role in balancing and restricting the meristem-promoting activity of auxin signaling. Involved in ethylene and giberellin (GA) signaling pathways or in a parallel pathway controlling cell and hypocotyl elongation and cellular organization. Involved in abscisic acid (ABA) signaling pathway. Plays a negative role in ABA-mediated seed germination and seedling development. Acts in association with LAMP1 to suppress ectopic stem cell niche formation in the shoot apical meristem (SAM) independently of cytokinin signaling pathway. Modulates responses to ABA, oxidative stress and abotic stress. Acts as a negative regulator of the ABA signaling pathway to modulate freezing and drought stress responses. Mediates carbon and amino acid metabolism. May be involved in the acquisition and/or maintenance of seed dormancy. Involved in the regulation of response to heat shock and plant defense. The chain is Probable glutamate carboxypeptidase AMP1 from Arabidopsis thaliana (Mouse-ear cress).